Here is a 688-residue protein sequence, read N- to C-terminus: Glycine--tRNA ligase beta subunit (688 aa).

The protein belongs to the class-II aminoacyl-tRNA synthetase family. Tetramer of two alpha and two beta subunits.

The protein localises to the cytoplasm. It carries out the reaction tRNA(Gly) + glycine + ATP = glycyl-tRNA(Gly) + AMP + diphosphate. In Shewanella sp. (strain ANA-3), this protein is Glycine--tRNA ligase beta subunit.